A 181-amino-acid polypeptide reads, in one-letter code: Inner membrane-spanning protein YciB (181 aa).

5 consecutive transmembrane segments (helical) span residues 3–23 (LLFD…FGIY), 54–74 (SLAI…PWFI), 81–101 (IYWL…KPLI), 119–139 (LNLA…YVAY), and 149–169 (FKLF…AFYL).

The protein belongs to the YciB family.

The protein localises to the cell inner membrane. In terms of biological role, plays a role in cell envelope biogenesis, maintenance of cell envelope integrity and membrane homeostasis. This Legionella pneumophila (strain Corby) protein is Inner membrane-spanning protein YciB.